Here is a 355-residue protein sequence, read N- to C-terminus: U5 small nuclear ribonucleoprotein 40 kDa protein (355 aa).

WD repeat units follow at residues 60–99 (GHKG…INYS), 103–142 (GHKG…LIKR), 145–185 (EHSG…STHL), 187–226 (QHKY…DPLY), 230–269 (SHQD…PPNR), 280–319 (NFEK…LQYC), and 322–355 (GHSG…EIKP).

In terms of assembly, component of the pre-catalytic and catalytic spliceosome complexes. Component of the postcatalytic spliceosome P complex. Part of the U5 snRNP complex. Component of the U4/U6-U5 tri-snRNP complex.

It localises to the nucleus. In terms of biological role, required for pre-mRNA splicing as component of the activated spliceosome. Component of the U5 small nuclear ribonucleoprotein (snRNP) complex and the U4/U6-U5 tri-snRNP complex, building blocks of the spliceosome. This chain is U5 small nuclear ribonucleoprotein 40 kDa protein (snrnp40), found in Dictyostelium discoideum (Social amoeba).